A 93-amino-acid polypeptide reads, in one-letter code: UPF0250 protein PSPA7_1111 (93 aa).

This sequence belongs to the UPF0250 family.

In Pseudomonas paraeruginosa (strain DSM 24068 / PA7) (Pseudomonas aeruginosa (strain PA7)), this protein is UPF0250 protein PSPA7_1111.